The following is a 257-amino-acid chain: 4-hydroxy-tetrahydrodipicolinate reductase (257 aa).

7-12 (GCLGRM) is an NAD(+) binding site. Arg34 is an NADP(+) binding site. NAD(+) is bound by residues 96–98 (GTT) and 117–120 (SCNM). His149 serves as the catalytic Proton donor/acceptor. (S)-2,3,4,5-tetrahydrodipicolinate is bound at residue His150. Lys153 functions as the Proton donor in the catalytic mechanism. Residue 159–160 (GT) coordinates (S)-2,3,4,5-tetrahydrodipicolinate.

This sequence belongs to the DapB family.

It localises to the cytoplasm. It carries out the reaction (S)-2,3,4,5-tetrahydrodipicolinate + NAD(+) + H2O = (2S,4S)-4-hydroxy-2,3,4,5-tetrahydrodipicolinate + NADH + H(+). It catalyses the reaction (S)-2,3,4,5-tetrahydrodipicolinate + NADP(+) + H2O = (2S,4S)-4-hydroxy-2,3,4,5-tetrahydrodipicolinate + NADPH + H(+). It participates in amino-acid biosynthesis; L-lysine biosynthesis via DAP pathway; (S)-tetrahydrodipicolinate from L-aspartate: step 4/4. In terms of biological role, catalyzes the conversion of 4-hydroxy-tetrahydrodipicolinate (HTPA) to tetrahydrodipicolinate. This chain is 4-hydroxy-tetrahydrodipicolinate reductase, found in Anaplasma marginale (strain St. Maries).